A 153-amino-acid chain; its full sequence is Deoxyuridine 5'-triphosphate nucleotidohydrolase (153 aa).

Substrate-binding positions include arginine 71–glycine 73, asparagine 84, threonine 88–aspartate 90, and lysine 98.

It belongs to the dUTPase family. Mg(2+) is required as a cofactor.

It carries out the reaction dUTP + H2O = dUMP + diphosphate + H(+). The protein operates within pyrimidine metabolism; dUMP biosynthesis; dUMP from dCTP (dUTP route): step 2/2. In terms of biological role, this enzyme is involved in nucleotide metabolism: it produces dUMP, the immediate precursor of thymidine nucleotides and it decreases the intracellular concentration of dUTP so that uracil cannot be incorporated into DNA. This Ehrlichia canis (strain Jake) protein is Deoxyuridine 5'-triphosphate nucleotidohydrolase.